Here is a 283-residue protein sequence, read N- to C-terminus: MNDSQRVSILSEALPYIQSFSGRKIVIKYGGSVMENDNLKNAFFRDIALLSTVGVCPIVIHGGGPEINNWLRKLEISPKFENGLRITDQKTMEIVEMVLMGRVNKEIVKGINKTGSLAVGISGLDGNLIQSRELGDGSHGLVGEVTKINPEILDPLISKGYIPIISSIGSTLEGISHNINADFVAGEIAAAINAEKLILLTDTQGILKEKDDKNSLVAKTNLKEARDFIDKKIVTAGMIPKTECCIRALAQGVKAAHIIDGQIEHSLLLEIFTNSGIGTMIVA.

Substrate is bound by residues 63–64 (GG), R85, and N178.

This sequence belongs to the acetylglutamate kinase family. ArgB subfamily.

It is found in the cytoplasm. The catalysed reaction is N-acetyl-L-glutamate + ATP = N-acetyl-L-glutamyl 5-phosphate + ADP. It participates in amino-acid biosynthesis; L-arginine biosynthesis; N(2)-acetyl-L-ornithine from L-glutamate: step 2/4. Its function is as follows. Catalyzes the ATP-dependent phosphorylation of N-acetyl-L-glutamate. The chain is Acetylglutamate kinase from Prochlorococcus marinus (strain AS9601).